The following is a 765-amino-acid chain: Protein transport protein Sec23A (765 aa).

4 residues coordinate Zn(2+): cysteine 61, cysteine 66, cysteine 85, and cysteine 88. The Gelsolin-like repeat unit spans residues 632 to 718 (PEPVLLDSSS…EHGGSQARFL (87 aa)).

It belongs to the SEC23/SEC24 family. SEC23 subfamily. In terms of assembly, COPII is composed of at least five proteins: the Sec23/24 complex, the Sec13/31 complex and Sar1.

The protein resides in the cytoplasmic vesicle. It is found in the COPII-coated vesicle membrane. The protein localises to the endoplasmic reticulum membrane. It localises to the cytoplasm. Its subcellular location is the cytosol. Its function is as follows. Component of the coat protein complex II (COPII) which promotes the formation of transport vesicles from the endoplasmic reticulum (ER). The coat has two main functions, the physical deformation of the endoplasmic reticulum membrane into vesicles and the selection of cargo molecules for their transport to the Golgi complex. The chain is Protein transport protein Sec23A from Xenopus tropicalis (Western clawed frog).